The following is a 765-amino-acid chain: Probable glycosyltransferase STELLO2 (765 aa).

Topologically, residues 1 to 43 (MLVQDRVAPKPPKSRIRELPSRDRFAEPKILDFSSWVSDNVYR) are cytoplasmic. The chain crosses the membrane as a helical span at residues 44 to 64 (IVIIFLFIVTVAAFFFLYNTT). Topologically, residues 65-765 (DTASLLCFQS…EGDPLLMELV (701 aa)) are lumenal. Asparagine 235 and asparagine 723 each carry an N-linked (GlcNAc...) asparagine glycan.

This sequence belongs to the STELLO family. In terms of assembly, homo- and heterodimer with STL1. Interacts with CESA1, CESA3, CESA4, CESA6, CESA7 and CESA8, but not with GOT1. As to expression, expressed in cells that are expanding or producing secondary cell walls.

Its subcellular location is the golgi apparatus membrane. Functionally, probable glycosyltransferase regulating the assembly and trafficking of cellulose synthase complexes. This is Probable glycosyltransferase STELLO2 from Arabidopsis thaliana (Mouse-ear cress).